The following is a 596-amino-acid chain: Elongation factor 4 (596 aa).

A tr-type G domain is found at 2–184; sequence RNIRNFSIIA…AIVHRIPPPT (183 aa). GTP-binding positions include 14-19 and 131-134; these read DHGKST and NKID.

The protein belongs to the TRAFAC class translation factor GTPase superfamily. Classic translation factor GTPase family. LepA subfamily.

Its subcellular location is the cell inner membrane. It carries out the reaction GTP + H2O = GDP + phosphate + H(+). Functionally, required for accurate and efficient protein synthesis under certain stress conditions. May act as a fidelity factor of the translation reaction, by catalyzing a one-codon backward translocation of tRNAs on improperly translocated ribosomes. Back-translocation proceeds from a post-translocation (POST) complex to a pre-translocation (PRE) complex, thus giving elongation factor G a second chance to translocate the tRNAs correctly. Binds to ribosomes in a GTP-dependent manner. This is Elongation factor 4 from Xanthomonas oryzae pv. oryzae (strain PXO99A).